A 247-amino-acid chain; its full sequence is ATP synthase subunit a, chloroplastic (247 aa).

5 consecutive transmembrane segments (helical) span residues 36 to 56 (GQVL…SIAG), 95 to 115 (IPFL…GALI), 134 to 154 (INTT…AGFS), 199 to 219 (LVVG…IMLL), and 220 to 240 (GLFT…AYIG).

Belongs to the ATPase A chain family. In terms of assembly, F-type ATPases have 2 components, CF(1) - the catalytic core - and CF(0) - the membrane proton channel. CF(1) has five subunits: alpha(3), beta(3), gamma(1), delta(1), epsilon(1). CF(0) has four main subunits: a, b, b' and c.

Its subcellular location is the plastid. The protein localises to the chloroplast thylakoid membrane. Functionally, key component of the proton channel; it plays a direct role in the translocation of protons across the membrane. In Tupiella akineta (Green alga), this protein is ATP synthase subunit a, chloroplastic.